A 117-amino-acid chain; its full sequence is Heat shock 70 kDa protein 1-like (117 aa).

ATP is bound by residues 72-75 and 84-87; these read ERAK and GSTR.

This sequence belongs to the heat shock protein 70 family. Interacts with PRKN. Detected at higher levels in caput epididymal spermatazoa than in cauda epididymal spermatazoa (at protein level).

Functionally, molecular chaperone implicated in a wide variety of cellular processes, including protection of the proteome from stress, folding and transport of newly synthesized polypeptides, activation of proteolysis of misfolded proteins and the formation and dissociation of protein complexes. Plays a pivotal role in the protein quality control system, ensuring the correct folding of proteins, the re-folding of misfolded proteins and controlling the targeting of proteins for subsequent degradation. This is achieved through cycles of ATP binding, ATP hydrolysis and ADP release, mediated by co-chaperones. The affinity for polypeptides is regulated by its nucleotide bound state. In the ATP-bound form, it has a low affinity for substrate proteins. However, upon hydrolysis of the ATP to ADP, it undergoes a conformational change that increases its affinity for substrate proteins. It goes through repeated cycles of ATP hydrolysis and nucleotide exchange, which permits cycles of substrate binding and release. Positive regulator of PRKN translocation to damaged mitochondria. In Mesocricetus auratus (Golden hamster), this protein is Heat shock 70 kDa protein 1-like.